A 318-amino-acid polypeptide reads, in one-letter code: L-lactate dehydrogenase (318 aa).

The NAD(+) site is built by Val-16, Asp-37, and Tyr-68. Substrate-binding positions include Gln-85, Arg-91, and 123–126 (NPVD). Residues 121 to 123 (VAN) and Ser-146 contribute to the NAD(+) site. A substrate-binding site is contributed by 151 to 154 (DSAR). The active-site Proton acceptor is His-178. Tyr-222 bears the Phosphotyrosine mark. Thr-231 contributes to the substrate binding site.

This sequence belongs to the LDH/MDH superfamily. LDH family. As to quaternary structure, homotetramer.

Its subcellular location is the cytoplasm. The catalysed reaction is (S)-lactate + NAD(+) = pyruvate + NADH + H(+). Its pathway is fermentation; pyruvate fermentation to lactate; (S)-lactate from pyruvate: step 1/1. Catalyzes the conversion of lactate to pyruvate. This is L-lactate dehydrogenase from Mycoplasma mobile (strain ATCC 43663 / 163K / NCTC 11711) (Mesomycoplasma mobile).